A 228-amino-acid polypeptide reads, in one-letter code: UPF0328 protein ECU07_0040 (228 aa).

This sequence belongs to the UPF0328 family.

This is UPF0328 protein ECU07_0040 from Encephalitozoon cuniculi (strain GB-M1) (Microsporidian parasite).